The following is a 245-amino-acid chain: Probable phosphatase Ent638_1550 (245 aa).

Histidine 7, histidine 9, histidine 15, histidine 40, glutamate 73, histidine 101, histidine 131, aspartate 192, and histidine 194 together coordinate Zn(2+).

Belongs to the PHP family. As to quaternary structure, homotrimer. Zn(2+) serves as cofactor.

In Enterobacter sp. (strain 638), this protein is Probable phosphatase Ent638_1550.